Here is a 559-residue protein sequence, read N- to C-terminus: Suppressor of tumorigenicity 7 protein-like (559 aa).

A run of 3 helical transmembrane segments spans residues 39 to 59, 83 to 103, and 513 to 533; these read GLAN…LYAL, FYVA…IFEW, and LPFF…IALL.

The protein belongs to the ST7 family.

Its subcellular location is the membrane. This is Suppressor of tumorigenicity 7 protein-like (St7l) from Rattus norvegicus (Rat).